Here is a 438-residue protein sequence, read N- to C-terminus: Trigger factor (438 aa).

The 72-residue stretch at 160 to 231 (SDQVTIEEQG…IMDVKTKQLQ (72 aa)) folds into the PPIase FKBP-type domain. Residues 407–438 (AQLSGPQAETVAADQGEQQAEGQEESAEKSEE) form a disordered region. The segment covering 418-427 (AADQGEQQAE) has biased composition (low complexity).

It belongs to the FKBP-type PPIase family. Tig subfamily.

It localises to the cytoplasm. The catalysed reaction is [protein]-peptidylproline (omega=180) = [protein]-peptidylproline (omega=0). Involved in protein export. Acts as a chaperone by maintaining the newly synthesized protein in an open conformation. Functions as a peptidyl-prolyl cis-trans isomerase. This is Trigger factor from Deinococcus deserti (strain DSM 17065 / CIP 109153 / LMG 22923 / VCD115).